An 80-amino-acid chain; its full sequence is Exodeoxyribonuclease 7 small subunit (80 aa).

The protein belongs to the XseB family. Heterooligomer composed of large and small subunits.

The protein localises to the cytoplasm. The catalysed reaction is Exonucleolytic cleavage in either 5'- to 3'- or 3'- to 5'-direction to yield nucleoside 5'-phosphates.. Functionally, bidirectionally degrades single-stranded DNA into large acid-insoluble oligonucleotides, which are then degraded further into small acid-soluble oligonucleotides. The polypeptide is Exodeoxyribonuclease 7 small subunit (Klebsiella pneumoniae (strain 342)).